A 364-amino-acid chain; its full sequence is Chorismate synthase (364 aa).

2 residues coordinate NADP(+): arginine 48 and arginine 54. Residues 125–127 (RSS), 238–239 (NA), glycine 278, 293–297 (KPTSS), and arginine 319 contribute to the FMN site.

Belongs to the chorismate synthase family. Homotetramer. FMNH2 serves as cofactor.

The catalysed reaction is 5-O-(1-carboxyvinyl)-3-phosphoshikimate = chorismate + phosphate. It functions in the pathway metabolic intermediate biosynthesis; chorismate biosynthesis; chorismate from D-erythrose 4-phosphate and phosphoenolpyruvate: step 7/7. Functionally, catalyzes the anti-1,4-elimination of the C-3 phosphate and the C-6 proR hydrogen from 5-enolpyruvylshikimate-3-phosphate (EPSP) to yield chorismate, which is the branch point compound that serves as the starting substrate for the three terminal pathways of aromatic amino acid biosynthesis. This reaction introduces a second double bond into the aromatic ring system. In Shewanella loihica (strain ATCC BAA-1088 / PV-4), this protein is Chorismate synthase.